Consider the following 390-residue polypeptide: Aspergillopepsin-1 (390 aa).

The signal sequence occupies residues 1 to 19; sequence MVNTSLLAALTAYAVAVAA. Residues 20-67 constitute a propeptide, activation peptide; it reads APTAPQVKGFSVNQVAVPKGVYRHPAAQLAKAYGKYHATVPTQVAAAA. A Peptidase A1 domain is found at 84–387; the sequence is YITQVTVGDD…DASGPRLGFA (304 aa). Active-site residues include D100 and D281.

The protein belongs to the peptidase A1 family. As to quaternary structure, monomer.

Its subcellular location is the secreted. It catalyses the reaction Hydrolysis of proteins with broad specificity. Generally favors hydrophobic residues in P1 and P1', but also accepts Lys in P1, which leads to activation of trypsinogen. Does not clot milk.. Its activity is regulated as follows. Inhibited by the microbial peptide pepstatin A. In terms of biological role, secreted aspartic endopeptidase that allows assimilation of proteinaceous substrates. The scissile peptide bond is attacked by a nucleophilic water molecule activated by two aspartic residues in the active site. Shows a broad primary substrate specificity. Favors hydrophobic residues at the P1 and P1' positions, but also accepts a lysine residue in the P1 position, leading to the activation of trypsinogen and chymotrypsinogen A. Hydrolyzes myoglobin, hemoglobin and other natural proteins. Hydrolyzes equine myoglobin between positions 'Met-1' and 'Gly-2', 'Lys-43' and 'Phe-44', and 'Leu-70' and 'Thr-71'. This Aspergillus pseudoglaucus (Eurotium repens) protein is Aspergillopepsin-1 (pepA).